A 443-amino-acid polypeptide reads, in one-letter code: D(2) dopamine receptor (443 aa).

Residues 1-37 (MDPLNLSWYDDDPESRNWSRPFNGSEGKVGKPHYNYY) are Extracellular-facing. N-linked (GlcNAc...) asparagine glycans are attached at residues asparagine 5, asparagine 17, and asparagine 23. The chain crosses the membrane as a helical span at residues 38–60 (AMLLTLLIFVIVFGNVLVCMAVS). Residues 61-70 (REKALQTTTN) are Cytoplasmic-facing. The helical transmembrane segment at 71–93 (YLIVSLAVADLLVATLVMPWVVY) threads the bilayer. Residues 94 to 108 (LEVVGEWKFSRIHCD) are Extracellular-facing. A disulfide bridge connects residues cysteine 107 and cysteine 182. Residues 109–130 (IFVTLDVMMCTASILNLCAISI) traverse the membrane as a helical segment. At 131–151 (DRYTAVAMPMLYNTRYSSKRR) the chain is on the cytoplasmic side. The helical transmembrane segment at 152-172 (VTVMIAIVWVLSFTISCPLLF) threads the bilayer. Residues 173–188 (GLNNTDQNECIIANPA) are Extracellular-facing. The helical transmembrane segment at 189-213 (FVVYSSVVSFYVPFIVTLLVYIKIY) threads the bilayer. The interaction with PPP1R9B stretch occupies residues 211–373 (KIYIVLRRRR…SQQKEKKATQ (163 aa)). The Cytoplasmic segment spans residues 214–373 (IVLRRRRKRV…SQQKEKKATQ (160 aa)). The tract at residues 282 to 331 (EMLSSTSPPERTRYSPIPPSHHQLTLPDPSHHGLHSTANSPVKPEKNGHA) is disordered. The helical transmembrane segment at 374-395 (MLAIVLGVFIICWLPFFITHIL) threads the bilayer. Over 396–409 (NIHCDCNIPPVLYS) the chain is Extracellular. Cysteine 399 and cysteine 401 form a disulfide bridge. A helical transmembrane segment spans residues 410–431 (AFTWLGYVNSAVNPIIYTTFNV). Residues 432–443 (EFRKAFMKILHC) lie on the Cytoplasmic side of the membrane. Cysteine 443 is lipidated: S-palmitoyl cysteine.

The protein belongs to the G-protein coupled receptor 1 family. Forms homo- and heterooligomers with DRD4. The interaction with DRD4 may modulate agonist-induced downstream signaling. Interacts with CADPS and CADPS2. Interacts with GPRASP1, PPP1R9B and CLIC6. Interacts with ARRB2. Interacts with HTR2A. Interacts with DRD1. Interacts with KCNA2. Post-translationally, palmitoylated. Palmitoylation which is required for proper localization to the plasma membrane and stability of the receptor could be carried on by ZDHHC4, ZDHHC3 and ZDHHC8.

Its subcellular location is the cell membrane. It is found in the golgi apparatus membrane. Functionally, dopamine receptor whose activity is mediated by G proteins which inhibit adenylyl cyclase. Positively regulates postnatal regression of retinal hyaloid vessels via suppression of VEGFR2/KDR activity, downstream of OPN5. The protein is D(2) dopamine receptor (DRD2) of Mustela putorius furo (European domestic ferret).